The sequence spans 114 residues: TYRO protein tyrosine kinase-binding protein (114 aa).

An N-terminal signal peptide occupies residues 1–21 (MGALEPSWCLLFLPVLLTVGG). Residues 22-42 (LSPVQAQSDTFPRCDCSSVSP) lie on the Extracellular side of the membrane. A helical membrane pass occupies residues 43-63 (GVLAGIVLGDLVLTLLIALAV). Asp-52 contacts Ca(2+). The Cytoplasmic segment spans residues 64-114 (YSLGRLVSRGQGTAEGTRKQHIAETESPYQELQGQRPEVYSDLNTQRQYYR). The segment at 74-107 (QGTAEGTRKQHIAETESPYQELQGQRPEVYSDLN) is disordered. In terms of domain architecture, ITAM spans 81–109 (RKQHIAETESPYQELQGQRPEVYSDLNTQ). Phosphotyrosine is present on residues Tyr-92 and Tyr-103.

It belongs to the TYROBP family. In terms of assembly, homodimer; disulfide-linked. Homotrimer; disulfide-linked. Homotetramer; disulfide-linked. Homotrimers and homotetramers form when low levels of partner receptors are available and are competitive with assembly with interacting receptors. They may represent alternative oligomerization states or may be intermediates in the receptor assembly process. Binding of a metal cation aids in homooligomerization through coordination of the metal ion by the subunits of the oligomer. Interacts with TREM1. Interacts with TREM2. Interacts with TREM3. Interacts with CLECSF5. Interacts with CD300LB and CD300C2. Interacts with CD300E. Interacts (via ITAM domain) with SYK (via SH2 domains); activates SYK mediating neutrophil and macrophage integrin-mediated activation. Interacts (via transmembrane domain) with KLRK1 isoform 2 (via transmembrane domain); the interaction is required for KLRK1 NK cell surface expression and NK cell-mediated cytotoxicity. Interacts with KLRC2. Interacts with CD300H. Interacts with KLRD1. Interacts with KLRA4 and KLRA8. In terms of processing, tyrosine phosphorylated. Following ligand binding by associated receptors, tyrosine phosphorylated in the ITAM domain which leads to activation of additional tyrosine kinases and subsequent cell activation. In terms of tissue distribution, expressed on microglia (at protein level). Expressed on oligodendrocytes (at protein level). Expressed on macrophages and osteoclasts. Expressed on dendritic cells in liver, spleen, kidney and lung with highest levels in liver dendritic cells.

It is found in the cell membrane. Its function is as follows. Adapter protein which non-covalently associates with activating receptors found on the surface of a variety of immune cells to mediate signaling and cell activation following ligand binding by the receptors. TYROBP is tyrosine-phosphorylated in the ITAM domain following ligand binding by the associated receptors which leads to activation of additional tyrosine kinases and subsequent cell activation. Also has an inhibitory role in some cells. Non-covalently associates with activating receptors of the CD300 family to mediate cell activation. Also mediates cell activation through association with activating receptors of the CD200R family. Required for neutrophil activation mediated by integrin. Required for the activation of myeloid cells mediated by the CLEC5A/MDL1 receptor. Associates with natural killer (NK) cell receptors such as the KLRD1/KLRC2 heterodimer to mediate NK cell activation. Also associates non-covalently with the NK cell receptors KLRA4/LY49D and KLRA8/LY49H which leads to NK cell activation. Associates with TREM1 to mediate activation of neutrophils and monocytes. Associates with TREM2 on monocyte-derived dendritic cells to mediate up-regulation of chemokine receptor CCR7 and dendritic cell maturation and survival. Association with TREM2 mediates cytokine-induced formation of multinucleated giant cells which are formed by the fusion of macrophages. Stabilizes the TREM2 C-terminal fragment (TREM2-CTF) which is produced by TREM2 ectodomain shedding. In microglia, required with TREM2 for phagocytosis of apoptotic neurons. Required with ITGAM/CD11B in microglia to control production of microglial superoxide ions which promote the neuronal apoptosis that occurs during brain development. Promotes pro-inflammatory responses in microglia following nerve injury which accelerates degeneration of injured neurons. Positively regulates the expression of the IRAK3/IRAK-M kinase and IL10 production by liver dendritic cells and inhibits their T cell allostimulatory ability. Negatively regulates B cell proliferation. Required for CSF1-mediated osteoclast cytoskeletal organization. Positively regulates multinucleation during osteoclast development. The sequence is that of TYRO protein tyrosine kinase-binding protein from Mus musculus (Mouse).